We begin with the raw amino-acid sequence, 260 residues long: Thiazole synthase (260 aa).

Catalysis depends on Lys96, which acts as the Schiff-base intermediate with DXP. Residues Gly157, 184–185 (AG), and 206–207 (NT) each bind 1-deoxy-D-xylulose 5-phosphate.

It belongs to the ThiG family. Homotetramer. Forms heterodimers with either ThiH or ThiS.

It is found in the cytoplasm. The enzyme catalyses [ThiS sulfur-carrier protein]-C-terminal-Gly-aminoethanethioate + 2-iminoacetate + 1-deoxy-D-xylulose 5-phosphate = [ThiS sulfur-carrier protein]-C-terminal Gly-Gly + 2-[(2R,5Z)-2-carboxy-4-methylthiazol-5(2H)-ylidene]ethyl phosphate + 2 H2O + H(+). It functions in the pathway cofactor biosynthesis; thiamine diphosphate biosynthesis. Catalyzes the rearrangement of 1-deoxy-D-xylulose 5-phosphate (DXP) to produce the thiazole phosphate moiety of thiamine. Sulfur is provided by the thiocarboxylate moiety of the carrier protein ThiS. In vitro, sulfur can be provided by H(2)S. This Bradyrhizobium sp. (strain BTAi1 / ATCC BAA-1182) protein is Thiazole synthase.